Consider the following 216-residue polypeptide: Phosphatidylserine decarboxylase proenzyme (216 aa).

The Schiff-base intermediate with substrate; via pyruvic acid role is filled by serine 183. Serine 183 carries the pyruvic acid (Ser); by autocatalysis modification.

Belongs to the phosphatidylserine decarboxylase family. PSD-A subfamily. In terms of assembly, heterodimer of a large membrane-associated beta subunit and a small pyruvoyl-containing alpha subunit. Pyruvate serves as cofactor. Is synthesized initially as an inactive proenzyme. Formation of the active enzyme involves a self-maturation process in which the active site pyruvoyl group is generated from an internal serine residue via an autocatalytic post-translational modification. Two non-identical subunits are generated from the proenzyme in this reaction, and the pyruvate is formed at the N-terminus of the alpha chain, which is derived from the carboxyl end of the proenzyme. The post-translation cleavage follows an unusual pathway, termed non-hydrolytic serinolysis, in which the side chain hydroxyl group of the serine supplies its oxygen atom to form the C-terminus of the beta chain, while the remainder of the serine residue undergoes an oxidative deamination to produce ammonia and the pyruvoyl prosthetic group on the alpha chain.

It localises to the cell membrane. The enzyme catalyses a 1,2-diacyl-sn-glycero-3-phospho-L-serine + H(+) = a 1,2-diacyl-sn-glycero-3-phosphoethanolamine + CO2. It participates in phospholipid metabolism; phosphatidylethanolamine biosynthesis; phosphatidylethanolamine from CDP-diacylglycerol: step 2/2. Catalyzes the formation of phosphatidylethanolamine (PtdEtn) from phosphatidylserine (PtdSer). The protein is Phosphatidylserine decarboxylase proenzyme of Cupriavidus taiwanensis (strain DSM 17343 / BCRC 17206 / CCUG 44338 / CIP 107171 / LMG 19424 / R1) (Ralstonia taiwanensis (strain LMG 19424)).